A 363-amino-acid polypeptide reads, in one-letter code: Transcription factor PIF6 (363 aa).

Disordered regions lie at residues 154–204 (SEGS…RNDI) and 340–363 (IPNP…KTNR). Residues 178 to 188 (RTRKALVKRKR) are compositionally biased toward basic residues. In terms of domain architecture, bHLH spans 188-237 (RNAEAYNSPERNQRNDINKKMRTLQNLLPNSHKDDNESMLDEAINYMTNL). Positions 340 to 350 (IPNPNSLSNLD) are enriched in polar residues. The segment covering 354-363 (LHKKSRKTNR) has biased composition (basic residues).

As to quaternary structure, homodimer. Interacts with APRR1/TOC1. Binds to RGL2 and RGA. Associates to PTAC12/HMR/PAP5 which acts as a transcriptional coactivator. As to expression, mainly expressed in fruits and flowers and, to a lower extent, in leaves, stems, seedlings and roots.

The protein resides in the nucleus. In terms of biological role, transcription factor. This chain is Transcription factor PIF6, found in Arabidopsis thaliana (Mouse-ear cress).